The chain runs to 833 residues: Toll-like receptor 4 (833 aa).

Residues 1–23 form the signal peptide; the sequence is MMPPTRLAGTLIPAMAFLSCLRP. Positions 24–54 constitute an LRRNT domain; sequence ESWDPCVEVVPNITYQCMDLNLHKIPDNIPS. Residues 24–632 lie on the Extracellular side of the membrane; it reads ESWDPCVEVV…FRNATCQVRK (609 aa). A disulfide bridge connects residues Cys-29 and Cys-40. N-linked (GlcNAc...) asparagine glycosylation occurs at Asn-35. 5 LRR repeats span residues 55–76, 79–100, 103–124, 127–148, and 151–172; these read STKD…SFSN, ELQV…AYQG, HLSI…AFSG, SLQT…PIGH, and TLKE…EYFS. Residue Asn-173 is glycosylated (N-linked (GlcNAc...) asparagine). LRR repeat units follow at residues 176 to 197, 205 to 225, and 227 to 236; these read NLEY…DLQV, NLSL…AFKE, and KLRELTLRSN. Residue Asn-205 is glycosylated (N-linked (GlcNAc...) asparagine). Asn-238 carries N-linked (GlcNAc...) asparagine glycosylation. Cysteines 281 and 306 form a disulfide. Residue Asn-309 is glycosylated (N-linked (GlcNAc...) asparagine). LRR repeat units lie at residues 352–373, 374–394, 400–420, 423–444, 448–456, 472–495, 497–518, 521–542, and 545–565; these read PLKE…VKLE, SLEF…CSER, RLKH…NFLG, QLEY…SVFL, NLRYLDISY, SLQI…FMEL, NLTI…AFNS, KLQL…PYEP, and SLQT…QELR. A disulfide bridge links Cys-390 with Cys-391. 2 N-linked (GlcNAc...) asparagine glycosylation sites follow: Asn-497 and Asn-526. Residues Asn-570 and Asn-575 are each glycosylated (N-linked (GlcNAc...) asparagine). The LRRCT domain maps to 579-630; it reads NDFACVCEHQSFLQWVKDQRQLLVEVEQMVCAKPLDMQGMPMLNFRNATCQV. Cystine bridges form between Cys-583/Cys-609 and Cys-585/Cys-628. N-linked (GlcNAc...) asparagine glycosylation occurs at Asn-625. Residues 633-653 form a helical membrane-spanning segment; the sequence is TIITGSVFTVLLVFLVVVLVY. The Cytoplasmic portion of the chain corresponds to 654–833; sequence KFYFHLMLLA…PEGMADAEGS (180 aa). Residues 673 to 816 enclose the TIR domain; sequence STYDAFVIYS…IFWRRLRKAL (144 aa).

It belongs to the Toll-like receptor family. Belongs to the lipopolysaccharide (LPS) receptor, a multi-protein complex containing at least CD14, LY96 and TLR4. Binding to bacterial LPS leads to homodimerization. Interacts with LY96 via the extracellular domain. Interacts with MYD88 and TIRAP via their respective TIR domains. Interacts with TICAM2. Interacts with NOX4. Interacts with CNPY3 and HSP90B1; this interaction is required for proper folding in the endoplasmic reticulum. Interacts with MAP3K21; this interaction leads to negative regulation of TLR4 signaling. Interacts with CD36, following CD36 stimulation by oxLDL or amyloid-beta 42, and forms a heterodimer with TLR6. The trimeric complex is internalized and triggers inflammatory response. LYN kinase activity facilitates TLR4-TLR6 heterodimerization and signal initiation. Interacts with TICAM1 in response to LPS in a WDFY1-dependent manner. Interacts with WDFY1 in response to LPS. Interacts with SMPDL3B. Interacts with CEACAM1; upon lipopolysaccharide stimulation, forms a complex including TLR4 and the phosphorylated form of SYK and CEACAM1, which in turn, recruits PTPN6 that dephosphorylates SYK, reducing the production of reactive oxygen species (ROS) and lysosome disruption, which in turn, reduces the activity of the inflammasome. Interacts with RFTN1; the interaction occurs in response to lipopolysaccharide stimulation. Interacts with SCIMP; the interaction occurs in response to lipopolysaccharide stimulation and is enhanced by phosphorylation of SCIMP by LYN. This interaction facilitates the phosphorylation of TLR4 by LYN which elicits a selective cytokine response in macrophages. Interacts with TRAF3IP3. Interacts with TREM1; this interaction enhances TLR4-mediated inflammatory response. Interacts with ZG16B/PAUF. Interacts with CD82; this interaction inhibits TLR4-mediated signaling pathway. In terms of processing, phosphorylated on tyrosine residues by LYN after binding lipopolysaccharide. Post-translationally, ubiquitinated by RNF128 via 'Lys-28'-linked polyubiquitin chains, leading to proteasomal degradation.

The protein localises to the cell membrane. Its subcellular location is the early endosome. It localises to the cell projection. It is found in the ruffle. In terms of biological role, transmembrane receptor that functions as a pattern recognition receptor recognizing pathogen- and damage-associated molecular patterns (PAMPs and DAMPs) to induce innate immune responses via downstream signaling pathways. At the plasma membrane, cooperates with LY96 to mediate the innate immune response to bacterial lipopolysaccharide (LPS). Also involved in LPS-independent inflammatory responses triggered by free fatty acids, such as palmitate, and Ni(2+). Mechanistically, acts via MYD88, TIRAP and TRAF6, leading to NF-kappa-B activation, cytokine secretion and the inflammatory response. Alternatively, CD14-mediated TLR4 internalization via endocytosis is associated with the initiation of a MYD88-independent signaling via the TICAM1-TBK1-IRF3 axis leading to type I interferon production. In addition to the secretion of proinflammatory cytokines, initiates the activation of NLRP3 inflammasome and formation of a positive feedback loop between autophagy and NF-kappa-B signaling cascade. In complex with TLR6, promotes inflammation in monocytes/macrophages by associating with TLR6 and the receptor CD86. Upon ligand binding, such as oxLDL or amyloid-beta 42, the TLR4:TLR6 complex is internalized and triggers inflammatory response, leading to NF-kappa-B-dependent production of CXCL1, CXCL2 and CCL9 cytokines, via MYD88 signaling pathway, and CCL5 cytokine, via TICAM1 signaling pathway. In myeloid dendritic cells, vesicular stomatitis virus glycoprotein G but not LPS promotes the activation of IRF7, leading to type I IFN production in a CD14-dependent manner. The chain is Toll-like receptor 4 (TLR4) from Felis catus (Cat).